The primary structure comprises 237 residues: Phosphoribosylaminoimidazole-succinocarboxamide synthase (237 aa).

Belongs to the SAICAR synthetase family.

It catalyses the reaction 5-amino-1-(5-phospho-D-ribosyl)imidazole-4-carboxylate + L-aspartate + ATP = (2S)-2-[5-amino-1-(5-phospho-beta-D-ribosyl)imidazole-4-carboxamido]succinate + ADP + phosphate + 2 H(+). It functions in the pathway purine metabolism; IMP biosynthesis via de novo pathway; 5-amino-1-(5-phospho-D-ribosyl)imidazole-4-carboxamide from 5-amino-1-(5-phospho-D-ribosyl)imidazole-4-carboxylate: step 1/2. This is Phosphoribosylaminoimidazole-succinocarboxamide synthase from Deinococcus radiodurans (strain ATCC 13939 / DSM 20539 / JCM 16871 / CCUG 27074 / LMG 4051 / NBRC 15346 / NCIMB 9279 / VKM B-1422 / R1).